A 350-amino-acid chain; its full sequence is Probable sugar phosphate/phosphate translocator At4g32390 (350 aa).

Transmembrane regions (helical) follow at residues 15–35 (ILLSYTYVAIWIFLSFTVIVY), 49–69 (FPITLTMIHMAFCSSLAVILI), 89–109 (VVPIGALYSLSLWLSNSAYIY), 112–132 (VSFIQMLKALMPVAVYSIGVL), 146–166 (MLSISFGVAIAAYGEAKFDTW), 168–188 (VMLQLGAVAFEATRLVLIQIL), 205–225 (VAPCCLVFLFFPWIFVELPIL), 235–255 (FVIFGTNSVCAFALNLAVFLL), 263–283 (TMNVAGVVKDWLLIAFSWSVI), and 286–306 (TVTPLNLFGYGLAFLGVAYYN). The EamA domain occupies 38–155 (YILDKKMYNW…MLSISFGVAI (118 aa)). The tract at residues 324 to 350 (QGDEEEAGKLLEERESEAAAKRNETED) is disordered.

This sequence belongs to the TPT transporter family. TPT (TC 2.A.7.9) subfamily.

It localises to the membrane. This Arabidopsis thaliana (Mouse-ear cress) protein is Probable sugar phosphate/phosphate translocator At4g32390.